The primary structure comprises 392 residues: Succinate--CoA ligase [ADP-forming] subunit beta (392 aa).

One can recognise an ATP-grasp domain in the interval 9–248; the sequence is KDILKKFGVS…TNEEDPFEVE (240 aa). ATP is bound by residues K50, 57 to 59, E103, M106, and E111; that span reads GRG. Mg(2+) is bound by residues N203 and D217. Substrate-binding positions include N268 and 325 to 327; that span reads GIV.

This sequence belongs to the succinate/malate CoA ligase beta subunit family. Heterotetramer of two alpha and two beta subunits. Requires Mg(2+) as cofactor.

The catalysed reaction is succinate + ATP + CoA = succinyl-CoA + ADP + phosphate. It carries out the reaction GTP + succinate + CoA = succinyl-CoA + GDP + phosphate. It participates in carbohydrate metabolism; tricarboxylic acid cycle; succinate from succinyl-CoA (ligase route): step 1/1. Succinyl-CoA synthetase functions in the citric acid cycle (TCA), coupling the hydrolysis of succinyl-CoA to the synthesis of either ATP or GTP and thus represents the only step of substrate-level phosphorylation in the TCA. The beta subunit provides nucleotide specificity of the enzyme and binds the substrate succinate, while the binding sites for coenzyme A and phosphate are found in the alpha subunit. This Chlorobium limicola (strain DSM 245 / NBRC 103803 / 6330) protein is Succinate--CoA ligase [ADP-forming] subunit beta.